The primary structure comprises 327 residues: MVREKVKVSTRTLQWKCVESRRDSKRLYYGRFILSPLMKGQADTIGIAMRRALLGEIEGTCITRAKSENIPHDYSNIVGIQESVHEILMNLNEIVLRSNLYGTRNALICVQGPGYITARDIILPPSVEIIDNTQHIATLTEPIDLCIGLKIERNRGYSLKMSNNFEDRSYPIDAVFMPVQNANHSIHSYGNGNEKQEILFLEIWTNGSLTPKEALHEASRNLINLFIPFLHVEEETFYLENNQHQVTLPLFPFHNRLVNLRKKKKEQGFQYIFIDQLELPPRIYNCLKKSNIHTLLDLLNNSQEDLIKIEHFHIEDVKKILDILEKK.

Residues 1–233 form an alpha N-terminal domain (alpha-NTD) region; the sequence is MVREKVKVST…NLFIPFLHVE (233 aa). The alpha C-terminal domain (alpha-CTD) stretch occupies residues 266 to 327; it reads EQGFQYIFID…KKILDILEKK (62 aa).

The protein belongs to the RNA polymerase alpha chain family. In plastids the minimal PEP RNA polymerase catalytic core is composed of four subunits: alpha, beta, beta', and beta''. When a (nuclear-encoded) sigma factor is associated with the core the holoenzyme is formed, which can initiate transcription.

It is found in the plastid. The protein localises to the chloroplast. It carries out the reaction RNA(n) + a ribonucleoside 5'-triphosphate = RNA(n+1) + diphosphate. Its function is as follows. DNA-dependent RNA polymerase catalyzes the transcription of DNA into RNA using the four ribonucleoside triphosphates as substrates. The polypeptide is DNA-directed RNA polymerase subunit alpha (Barbarea verna (Land cress)).